The sequence spans 445 residues: MAAPEEQDLTQEQTEKLLQFQDLTGIESMEQCRLALEQHNWNMEAAVQDRLNEQEGVPSVFNPPPARPLQVNTADHRIYSYVVSRPQPRGLLGWGYYLIMLPFRFTYYTILDIFRFALRFIRPDPRSRVTDPVGDIVSFMHSFEEKYGRAHPVFYQGTYSQALNDAKRELRFLLVYLHGDDHQDSDEFCRNALCAPEVISLINSRMLFWACSTNKPEGYRVSQALRENTYPFLAMIMLKDRRMTVVGRLEGLIQPDDLINQLTFIMDANQTYLVSERLEREERNQTQVLRQQQDEAYLASLRADQEKERKKREEKERKRRKEEEVQQQKLAEERRRQNLQEEKERKLECLPPEPSPDDPESVKIIFKLPNDSRVERRFHFSQSLTVIHDFLFSLKESPEKFQIEANFPRRVLPCVPSEEWPNPPTLQEAGLSHTEVLFVQDLTDE.

Residue Ala2 is modified to N-acetylalanine. One can recognise a UBA domain in the interval 12–48 (EQTEKLLQFQDLTGIESMEQCRLALEQHNWNMEAAVQ). Position 167 is an N6-acetyllysine (Lys167). Positions 275–350 (SERLEREERN…EEKERKLECL (76 aa)) form a coiled coil. The tract at residues 300 to 361 (SLRADQEKER…PEPSPDDPES (62 aa)) is disordered. A compositionally biased stretch (basic and acidic residues) spans 303–348 (ADQEKERKKREEKERKRRKEEEVQQQKLAEERRRQNLQEEKERKLE). The 83-residue stretch at 357–439 (DDPESVKIIF…GLSHTEVLFV (83 aa)) folds into the UBX domain.

In terms of assembly, identified in a complex that contains SEL1L, OS9, FAF2/UBXD8, UBE2J1/UBC6E and AUP1. Interacts with YOD1. Interacts (via N-terminus) with UBQLN2 (via C-terminus). Interacts with PNPLA2. Interacts with ZFAND2B; probably through VCP. Interacts with LMBR1L and UBAC2.

It localises to the cytoplasm. Its subcellular location is the lipid droplet. It is found in the endoplasmic reticulum. Its function is as follows. Plays an important role in endoplasmic reticulum-associated degradation (ERAD) that mediates ubiquitin-dependent degradation of misfolded endoplasmic reticulum proteins. By controlling the steady-state expression of the IGF1R receptor, indirectly regulates the insulin-like growth factor receptor signaling pathway. Involved in inhibition of lipid droplet degradation by binding to phospholipase PNPL2 and inhibiting its activity by promoting dissociation of PNPL2 from its endogenous activator, ABHD5 which inhibits the rate of triacylglycerol hydrolysis. Involved in stress granule disassembly: associates with ubiquitinated G3BP1 in response to heat shock, thereby promoting interaction between ubiquitinated G3BP1 and VCP, followed by G3BP1 extraction from stress granules and stress granule disassembly. This is FAS-associated factor 2 (Faf2) from Mus musculus (Mouse).